Consider the following 95-residue polypeptide: Co-chaperonin GroES (95 aa).

This sequence belongs to the GroES chaperonin family. As to quaternary structure, heptamer of 7 subunits arranged in a ring. Interacts with the chaperonin GroEL.

It localises to the cytoplasm. In terms of biological role, together with the chaperonin GroEL, plays an essential role in assisting protein folding. The GroEL-GroES system forms a nano-cage that allows encapsulation of the non-native substrate proteins and provides a physical environment optimized to promote and accelerate protein folding. GroES binds to the apical surface of the GroEL ring, thereby capping the opening of the GroEL channel. This Pelodictyon phaeoclathratiforme (strain DSM 5477 / BU-1) protein is Co-chaperonin GroES.